A 199-amino-acid chain; its full sequence is Peroxiredoxin 2 (199 aa).

The 159-residue stretch at A8 to F166 folds into the Thioredoxin domain. The Cysteine sulfenic acid (-SOH) intermediate role is filled by C53.

It belongs to the peroxiredoxin family. AhpC/Prx1 subfamily. Homodimer; disulfide-linked, upon oxidation.

The catalysed reaction is a hydroperoxide + [thioredoxin]-dithiol = an alcohol + [thioredoxin]-disulfide + H2O. Thiol-specific peroxidase that catalyzes the reduction of hydrogen peroxide and organic hydroperoxides to water and alcohols, respectively. Plays a role in cell protection against oxidative stress by detoxifying peroxides and as sensor of hydrogen peroxide-mediated signaling events. This chain is Peroxiredoxin 2 (tsa-2), found in Brugia malayi (Filarial nematode worm).